A 1062-amino-acid chain; its full sequence is Isoleucine--tRNA ligase (1062 aa).

Residues 47–57 (PYTTGHIHLGT) carry the 'HIGH' region motif. The short motif at 591–595 (KMSKS) is the 'KMSKS' region element. Position 594 (lysine 594) interacts with ATP.

Belongs to the class-I aminoacyl-tRNA synthetase family. IleS type 2 subfamily. In terms of assembly, monomer. Requires Zn(2+) as cofactor.

The protein localises to the cytoplasm. The enzyme catalyses tRNA(Ile) + L-isoleucine + ATP = L-isoleucyl-tRNA(Ile) + AMP + diphosphate. In terms of biological role, catalyzes the attachment of isoleucine to tRNA(Ile). As IleRS can inadvertently accommodate and process structurally similar amino acids such as valine, to avoid such errors it has two additional distinct tRNA(Ile)-dependent editing activities. One activity is designated as 'pretransfer' editing and involves the hydrolysis of activated Val-AMP. The other activity is designated 'posttransfer' editing and involves deacylation of mischarged Val-tRNA(Ile). The sequence is that of Isoleucine--tRNA ligase from Methanospirillum hungatei JF-1 (strain ATCC 27890 / DSM 864 / NBRC 100397 / JF-1).